The primary structure comprises 292 residues: Insulin-like growth factor-binding protein 3 (292 aa).

An N-terminal signal peptide occupies residues Met-1–Ala-27. Positions Pro-36–Ala-119 constitute an IGFBP N-terminal domain. Cystine bridges form between Cys-40-Cys-69, Cys-43-Cys-71, Cys-51-Cys-72, Cys-60-Cys-75, Cys-83-Cys-96, and Cys-90-Cys-116. N-linked (GlcNAc...) asparagine glycosylation is found at Asn-118, Asn-124, and Asn-137. Disordered stretches follow at residues Ala-127 to Val-161 and Tyr-191 to Tyr-211. Positions Leu-129 to Thr-139 are enriched in polar residues. Ser-149 bears the Phosphoserine mark. A compositionally biased stretch (polar residues) spans Glu-192–Ser-203. Asn-200 is a glycosylation site (N-linked (GlcNAc...) asparagine). Phosphoserine is present on Ser-202. A Thyroglobulin type-1 domain is found at Tyr-211 to Cys-286. 3 disulfides stabilise this stretch: Cys-214/Cys-241, Cys-252/Cys-263, and Cys-265/Cys-286.

In terms of assembly, interacts with XLKD1. Binds IGF2 more than IGF1. Forms a ternary complex of about 140 to 150 kDa with IGF1 or IGF2 and a 85 kDa glycoprotein (ALS). Interacts with humanin; humanin competes with importin KPNB1 for binding to IGFBP3, blocking IGFBP3 nuclear import and IGFBP3-mediated apoptosis. Interacts with TMEM219. Interacts with RXRA; this interaction modulates the transcriptional activity of RXRA. Interacts with LRP1; this interaction mediates cell growth inhibition independent of IGF1. In terms of processing, phosphorylated by FAM20C in the extracellular medium. Phosphorylated by CK2; resulting in decreased nuclear localization.

It localises to the secreted. Its subcellular location is the nucleus. Multifunctional protein that plays a critical role in regulating the availability of IGFs such as IGF1 and IGF2 to their receptors and thereby regulates IGF-mediated cellular processes including proliferation, differentiation, and apoptosis in a cell-type specific manner. Also exhibits IGF-independent antiproliferative and apoptotic effects mediated by its receptor TMEM219/IGFBP-3R. Inhibits the positive effect of humanin on insulin sensitivity. Promotes testicular germ cell apoptosis. Acts via LRP-1/alpha2M receptor, also known as TGF-beta type V receptor, to mediate cell growth inhibition independent of IGF1. Mechanistically, induces serine-specific dephosphorylation of IRS1 or IRS2 upon ligation to its receptor, leading to the inhibitory cascade. In the nucleus, interacts with transcription factors such as retinoid X receptor-alpha/RXRA to regulate transcriptional signaling and apoptosis. The polypeptide is Insulin-like growth factor-binding protein 3 (Igfbp3) (Rattus norvegicus (Rat)).